A 132-amino-acid chain; its full sequence is Keratin, high-sulfur matrix protein, IIIA3 (132 aa).

Its function is as follows. The keratin products of mammalian epidermal derivatives such as wool and hair consist of microfibrils embedded in a rigid matrix of other proteins. The matrix proteins include the high-sulfur and high-tyrosine keratins, having molecular weights of 6-20 kDa, whereas the microfibrils contain the larger, low-sulfur keratins (40-56 kDa). In Capra hircus (Goat), this protein is Keratin, high-sulfur matrix protein, IIIA3.